The sequence spans 67 residues: Alpha-like toxin Lqh3 (67 aa).

The LCN-type CS-alpha/beta domain occupies Arg2–His66. 4 disulfide bridges follow: Cys12-Cys65, Cys16-Cys37, Cys23-Cys47, and Cys27-Cys49. A Serine amide modification is found at Ser67.

Belongs to the long (4 C-C) scorpion toxin superfamily. Sodium channel inhibitor family. Alpha subfamily. In terms of assembly, monomer. Expressed by the venom gland.

Its subcellular location is the secreted. Alpha toxins bind voltage-independently at site-3 of sodium channels (Nav) and inhibit the inactivation of the activated channels, thereby blocking neuronal transmission. The dissociation is voltage-dependent. This alpha-like toxin is highly toxic to insects and competes with LqhaIT on binding to insect sodium channels. Differs from classical anti-mammalian alpha-toxins as it inhibits sodium channel inactivation in cell bodies of hippocampus brain neurons, on which the anti-mammalian Lqh2 is inactive, and is unable to affect Nav1.2 in the rat brain, on which Lqh2 is highly active. Moreover, its pharmacological properties are unique in that its binding affinity for insect channels drops &gt;30-fold at pH 8.5 versus pH 6.5, and its rate of association with receptor site-3 on both insect and mammalian sodium channels is 4-15-fold slower compared with LqhaIT and Lqh2. In Leiurus hebraeus (Hebrew deathstalker scorpion), this protein is Alpha-like toxin Lqh3.